Consider the following 104-residue polypeptide: MIPGEIFYGSGDIEMNAAALSRLQMRIINAGDRPVQVGSHVHLPQANRALSFDRATAHGYRLDIPAATAVRFEPGIPQIVGLVPLGGRREVPGLTLNPPGRLDR.

It belongs to the urease beta subunit family. In terms of assembly, heterotrimer of UreA (gamma), UreB (beta) and UreC (alpha) subunits. Three heterotrimers associate to form the active enzyme.

It is found in the cytoplasm. The enzyme catalyses urea + 2 H2O + H(+) = hydrogencarbonate + 2 NH4(+). It participates in nitrogen metabolism; urea degradation; CO(2) and NH(3) from urea (urease route): step 1/1. In Mycobacterium bovis (strain BCG / Pasteur 1173P2), this protein is Urease subunit beta.